Here is a 71-residue protein sequence, read N- to C-terminus: Omega-conotoxin SO-3 (71 aa).

A signal peptide spans 1–22 (MKLTCMVIVAVLLLTACQLITA). The propeptide occupies 23-45 (DDSRGTQKHRTLRSKTKLSMSTR). Intrachain disulfides connect C46–C61, C53–C65, and C60–C70. A Cysteine amide modification is found at C70.

The protein belongs to the conotoxin O1 superfamily. As to expression, expressed by the venom duct.

Its subcellular location is the secreted. Functionally, omega-conotoxins act at presynaptic membranes, they bind and block voltage-gated calcium channels (Cav). This peptide selectively targets Cav2.2/CACNA1B (IC(50)=160 nM) voltage-gated calcium channels. When tested in mammals, this toxin displays an analgesic potency similar to MVIIA in a range of acute and chronic pain models in rodents, but has less adverse effects (tremor, diminution of spontaneous locomotor activity and bad coordinated locomotion) compared with identical dosages of MVIIA injected intrathecally. In Conus striatus (Striated cone), this protein is Omega-conotoxin SO-3.